Consider the following 142-residue polypeptide: Large ribosomal subunit protein uL13 (142 aa).

It belongs to the universal ribosomal protein uL13 family. In terms of assembly, part of the 50S ribosomal subunit.

This protein is one of the early assembly proteins of the 50S ribosomal subunit, although it is not seen to bind rRNA by itself. It is important during the early stages of 50S assembly. The polypeptide is Large ribosomal subunit protein uL13 (Pseudomonas putida (strain ATCC 700007 / DSM 6899 / JCM 31910 / BCRC 17059 / LMG 24140 / F1)).